The primary structure comprises 202 residues: Hydrogenase expression/formation protein HoxM (202 aa).

E15, D61, and H92 together coordinate Ni(2+).

It belongs to the peptidase A31 family.

Absolutely required for hydrogenase activity. Mediates the attachment of hydrogenase to the bacterial membrane; attachment is a requirement for enzymatic activity. This chain is Hydrogenase expression/formation protein HoxM (hoxM), found in Cupriavidus necator (strain ATCC 17699 / DSM 428 / KCTC 22496 / NCIMB 10442 / H16 / Stanier 337) (Ralstonia eutropha).